The chain runs to 215 residues: ATP phosphoribosyltransferase (215 aa).

The protein belongs to the ATP phosphoribosyltransferase family. Short subfamily. Heteromultimer composed of HisG and HisZ subunits.

It is found in the cytoplasm. The enzyme catalyses 1-(5-phospho-beta-D-ribosyl)-ATP + diphosphate = 5-phospho-alpha-D-ribose 1-diphosphate + ATP. The protein operates within amino-acid biosynthesis; L-histidine biosynthesis; L-histidine from 5-phospho-alpha-D-ribose 1-diphosphate: step 1/9. In terms of biological role, catalyzes the condensation of ATP and 5-phosphoribose 1-diphosphate to form N'-(5'-phosphoribosyl)-ATP (PR-ATP). Has a crucial role in the pathway because the rate of histidine biosynthesis seems to be controlled primarily by regulation of HisG enzymatic activity. This chain is ATP phosphoribosyltransferase, found in Lachnoclostridium phytofermentans (strain ATCC 700394 / DSM 18823 / ISDg) (Clostridium phytofermentans).